The following is a 516-amino-acid chain: mRNA export factor ICP27 homolog (516 aa).

Residues C231, H336, C338, and C343 each contribute to the Zn(2+) site. The CHC2-type zinc finger occupies 231-343 (CVFNDNGHGD…SNHKCDDVSC (113 aa)). The span at 399 to 409 (YSTSRDLPQTS) shows a compositional bias: polar residues. The disordered stretch occupies residues 399–423 (YSTSRDLPQTSHRSHKNQGTPKVKS).

This sequence belongs to the HHV-1 ICP27 protein family.

The protein localises to the virion tegument. Its subcellular location is the virion. The protein resides in the host nucleus. It localises to the host cytoplasm. Functionally, immediate early (EI) protein that plays many roles during productive infection including regulation of viral gene expression and nuclear export of intronless viral RNAs. This Homo sapiens (Human) protein is mRNA export factor ICP27 homolog.